The primary structure comprises 97 residues: Protein YcgL (97 aa).

Positions 1–85 (MLCVIYRSSK…PPEDLLKQHL (85 aa)) constitute a YcgL domain.

This Escherichia fergusonii (strain ATCC 35469 / DSM 13698 / CCUG 18766 / IAM 14443 / JCM 21226 / LMG 7866 / NBRC 102419 / NCTC 12128 / CDC 0568-73) protein is Protein YcgL.